The sequence spans 90 residues: Probable Fe(2+)-trafficking protein (90 aa).

It belongs to the Fe(2+)-trafficking protein family.

In terms of biological role, could be a mediator in iron transactions between iron acquisition and iron-requiring processes, such as synthesis and/or repair of Fe-S clusters in biosynthetic enzymes. The chain is Probable Fe(2+)-trafficking protein from Xylella fastidiosa (strain M23).